A 204-amino-acid chain; its full sequence is LexA repressor (204 aa).

A DNA-binding region (H-T-H motif) is located at residues 28–48; the sequence is VREIGEAVGLASSSTVHGHLD. Active-site for autocatalytic cleavage activity residues include serine 126 and lysine 164.

It belongs to the peptidase S24 family. As to quaternary structure, homodimer.

It carries out the reaction Hydrolysis of Ala-|-Gly bond in repressor LexA.. Represses a number of genes involved in the response to DNA damage (SOS response), including recA and lexA. In the presence of single-stranded DNA, RecA interacts with LexA causing an autocatalytic cleavage which disrupts the DNA-binding part of LexA, leading to derepression of the SOS regulon and eventually DNA repair. This is LexA repressor from Exiguobacterium sibiricum (strain DSM 17290 / CCUG 55495 / CIP 109462 / JCM 13490 / 255-15).